The primary structure comprises 329 residues: Phenylalanine--tRNA ligase alpha subunit (329 aa).

This sequence belongs to the class-II aminoacyl-tRNA synthetase family. Phe-tRNA synthetase alpha subunit type 1 subfamily. Tetramer of two alpha and two beta subunits. It depends on Mg(2+) as a cofactor.

It is found in the cytoplasm. The enzyme catalyses tRNA(Phe) + L-phenylalanine + ATP = L-phenylalanyl-tRNA(Phe) + AMP + diphosphate + H(+). The sequence is that of Phenylalanine--tRNA ligase alpha subunit (pheS) from Buchnera aphidicola subsp. Schizaphis graminum (strain Sg).